Here is a 332-residue protein sequence, read N- to C-terminus: Biotin synthase (332 aa).

The region spanning 53 to 282 (HFGKKVKLNM…TKEIRISGGR (230 aa)) is the Radical SAM core domain. The [4Fe-4S] cluster site is built by Cys71, Cys75, and Cys78. Residues Cys115, Cys147, Cys207, and Arg277 each coordinate [2Fe-2S] cluster.

Belongs to the radical SAM superfamily. Biotin synthase family. As to quaternary structure, homodimer. The cofactor is [4Fe-4S] cluster. It depends on [2Fe-2S] cluster as a cofactor.

The enzyme catalyses (4R,5S)-dethiobiotin + (sulfur carrier)-SH + 2 reduced [2Fe-2S]-[ferredoxin] + 2 S-adenosyl-L-methionine = (sulfur carrier)-H + biotin + 2 5'-deoxyadenosine + 2 L-methionine + 2 oxidized [2Fe-2S]-[ferredoxin]. Its pathway is cofactor biosynthesis; biotin biosynthesis; biotin from 7,8-diaminononanoate: step 2/2. Catalyzes the conversion of dethiobiotin (DTB) to biotin by the insertion of a sulfur atom into dethiobiotin via a radical-based mechanism. This Bacillus cereus (strain ATCC 14579 / DSM 31 / CCUG 7414 / JCM 2152 / NBRC 15305 / NCIMB 9373 / NCTC 2599 / NRRL B-3711) protein is Biotin synthase.